Here is a 74-residue protein sequence, read N- to C-terminus: MKLSFCFFLCAIVLFSFAEARINPNQLKRLRELVRDDEPTYCIELGERCPNPREGDWCCHKCVPEGKRFYCRDQ.

The first 20 residues, 1–20 (MKLSFCFFLCAIVLFSFAEA), serve as a signal peptide directing secretion. Positions 21–39 (RINPNQLKRLRELVRDDEP) are excised as a propeptide. 3 disulfides stabilise this stretch: cysteine 42-cysteine 59, cysteine 49-cysteine 62, and cysteine 58-cysteine 71.

In terms of tissue distribution, expressed by the venom gland.

The protein localises to the secreted. This Hexophthalma dolichocephala (Afrotropical spider) protein is U2-sicaritoxin-Sdo1a.